A 559-amino-acid polypeptide reads, in one-letter code: Potassium-transporting ATPase potassium-binding subunit (559 aa).

12 helical membrane passes run Phe6–Val26, Leu63–Leu83, Val131–Leu151, Ile173–Gly193, Phe253–Val273, Leu283–Trp303, Phe327–Val347, Ala356–Val376, Gly379–Gly399, Leu416–Leu436, Leu484–Ala504, and Gly524–Ile544.

Belongs to the KdpA family. As to quaternary structure, the system is composed of three essential subunits: KdpA, KdpB and KdpC.

It localises to the cell inner membrane. In terms of biological role, part of the high-affinity ATP-driven potassium transport (or Kdp) system, which catalyzes the hydrolysis of ATP coupled with the electrogenic transport of potassium into the cytoplasm. This subunit binds the periplasmic potassium ions and delivers the ions to the membrane domain of KdpB through an intramembrane tunnel. The sequence is that of Potassium-transporting ATPase potassium-binding subunit from Enterobacter sp. (strain 638).